A 152-amino-acid chain; its full sequence is MLP-like protein 165 (152 aa).

Belongs to the MLP family.

The polypeptide is MLP-like protein 165 (MLP165) (Arabidopsis thaliana (Mouse-ear cress)).